A 302-amino-acid polypeptide reads, in one-letter code: Glycine--tRNA ligase alpha subunit (302 aa).

It belongs to the class-II aminoacyl-tRNA synthetase family. As to quaternary structure, tetramer of two alpha and two beta subunits.

The protein resides in the cytoplasm. The enzyme catalyses tRNA(Gly) + glycine + ATP = glycyl-tRNA(Gly) + AMP + diphosphate. This Haemophilus influenzae (strain ATCC 51907 / DSM 11121 / KW20 / Rd) protein is Glycine--tRNA ligase alpha subunit (glyQ).